Here is a 105-residue protein sequence, read N- to C-terminus: Heme oxygenase (mycobilin-producing) (105 aa).

The ABM domain occupies Val3–Phe92. Heme is bound by residues Arg22–Arg26, His75, and Val83–Gly86.

This sequence belongs to the antibiotic biosynthesis monooxygenase family. In terms of assembly, homodimer.

It carries out the reaction heme b + 3 AH2 + 3 O2 + 2 H(+) = mycobilin a + Fe(2+) + 3 A + 3 H2O. It catalyses the reaction heme b + 3 AH2 + 3 O2 + 2 H(+) = mycobilin b + Fe(2+) + 3 A + 3 H2O. In terms of biological role, catalyzes the oxidative degradation of the heme macrocyclic porphyrin ring in the presence of a suitable electron donor such as ascorbate or NADPH--cytochrome P450 reductase, with subsequent release of free iron. The chain is Heme oxygenase (mycobilin-producing) (mhuD) from Mycobacterium tuberculosis (strain CDC 1551 / Oshkosh).